The chain runs to 69 residues: Conotoxin AbVIE (69 aa).

The signal sequence occupies residues Val-1–Ala-17. A propeptide spanning residues Glu-18–Thr-40 is cleaved from the precursor. 3 cysteine pairs are disulfide-bonded: Cys-43/Cys-57, Cys-50/Cys-61, and Cys-56/Cys-66.

Belongs to the conotoxin O1 superfamily. As to expression, expressed by the venom duct.

It is found in the secreted. The polypeptide is Conotoxin AbVIE (Conus abbreviatus (Abbreviated cone)).